Here is a 154-residue protein sequence, read N- to C-terminus: Snaclec salmorin subunit A (154 aa).

Residues 1–23 form the signal peptide; the sequence is MGRFIFVSFGLLVVFLSLSGTGA. Disulfide bonds link cysteine 27-cysteine 38, cysteine 55-cysteine 152, and cysteine 127-cysteine 144. The 120-residue stretch at 34-153 folds into the C-type lectin domain; sequence NNGHCYQAFN…CGQRNPFVCE (120 aa). Positions 66, 68, and 72 each coordinate Ca(2+). Glutamate 153 serves as a coordination point for Ca(2+).

This sequence belongs to the snaclec family. Heterodimer of subunits A and B; disulfide-linked. Expressed by the venom gland.

The protein resides in the secreted. Functionally, inhibits thrombin-induced fibrinogen clotting and factor Xa-induced prothrombin activation. Binds to thrombin and prothrombin exosites. This Gloydius brevicauda (Korean slamosa snake) protein is Snaclec salmorin subunit A.